The following is a 293-amino-acid chain: Dehydrodolichyl diphosphate synthase complex subunit NUS1 (293 aa).

The next 3 helical transmembrane spans lie at 1-23, 35-56, and 117-135; these read MTGL…RTLT, WIWR…GFTL, and IASL…ISVY. Residues asparagine 144 and asparagine 271 are each glycosylated (N-linked (GlcNAc...) asparagine). Residues 290-292 carry the RXG motif; crucial for prenyltransferase activity motif; it reads RLG. Isopentenyl diphosphate contacts are provided by leucine 291 and glycine 292.

This sequence belongs to the UPP synthase family. The active dehydrodolichyl diphosphate synthase complex is a heterotetramer composed of a dimer of heterodimer of DHDDS and NUS1. Interacts with NPC2. Requires Mg(2+) as cofactor.

It localises to the endoplasmic reticulum membrane. It catalyses the reaction n isopentenyl diphosphate + (2E,6E)-farnesyl diphosphate = a di-trans,poly-cis-polyprenyl diphosphate + n diphosphate. The protein operates within protein modification; protein glycosylation. It functions in the pathway lipid metabolism. With respect to regulation, activated by phospholipids including cardiolipin, phosphatidylcholine, phosphatidylethanolamine, phosphatidylinositol and phosphatidylserine. With DHDDS, forms the dehydrodolichyl diphosphate synthase (DDS) complex, an essential component of the dolichol monophosphate (Dol-P) biosynthetic machinery. Both subunits contribute to enzymatic activity, i.e. condensation of multiple copies of isopentenyl pyrophosphate (IPP) to farnesyl pyrophosphate (FPP) to produce dehydrodolichyl diphosphate (Dedol-PP), a precursor of dolichol phosphate which is utilized as a sugar carrier in protein glycosylation in the endoplasmic reticulum (ER). Synthesizes long-chain polyprenols, mostly of C95 and C100 chain length. Regulates the glycosylation and stability of nascent NPC2, thereby promoting trafficking of LDL-derived cholesterol. Acts as a specific receptor for the N-terminus of Nogo-B, a neural and cardiovascular regulator. The chain is Dehydrodolichyl diphosphate synthase complex subunit NUS1 from Homo sapiens (Human).